A 187-amino-acid polypeptide reads, in one-letter code: Holliday junction branch migration complex subunit RuvA (187 aa).

The segment at 1–64 is domain I; sequence MIEYIRGIIE…EDGFQIFGFK (64 aa). The segment at 65 to 136 is domain II; that stretch reads RKEELELFEK…ELKDKVPKEV (72 aa). The segment at 136-139 is flexible linker; the sequence is VVVP. The domain III stretch occupies residues 140–187; that stretch reads KEDSLLNEALEALLALGYTKSEAIYALSDVNCESVEQAVKEALKKLAK.

It belongs to the RuvA family. As to quaternary structure, homotetramer. Forms an RuvA(8)-RuvB(12)-Holliday junction (HJ) complex. HJ DNA is sandwiched between 2 RuvA tetramers; dsDNA enters through RuvA and exits via RuvB. An RuvB hexamer assembles on each DNA strand where it exits the tetramer. Each RuvB hexamer is contacted by two RuvA subunits (via domain III) on 2 adjacent RuvB subunits; this complex drives branch migration. In the full resolvosome a probable DNA-RuvA(4)-RuvB(12)-RuvC(2) complex forms which resolves the HJ.

It localises to the cytoplasm. Functionally, the RuvA-RuvB-RuvC complex processes Holliday junction (HJ) DNA during genetic recombination and DNA repair, while the RuvA-RuvB complex plays an important role in the rescue of blocked DNA replication forks via replication fork reversal (RFR). RuvA specifically binds to HJ cruciform DNA, conferring on it an open structure. The RuvB hexamer acts as an ATP-dependent pump, pulling dsDNA into and through the RuvAB complex. HJ branch migration allows RuvC to scan DNA until it finds its consensus sequence, where it cleaves and resolves the cruciform DNA. The protein is Holliday junction branch migration complex subunit RuvA of Caldanaerobacter subterraneus subsp. tengcongensis (strain DSM 15242 / JCM 11007 / NBRC 100824 / MB4) (Thermoanaerobacter tengcongensis).